The chain runs to 257 residues: UPF0246 protein CLH_2088 (257 aa).

It belongs to the UPF0246 family.

The polypeptide is UPF0246 protein CLH_2088 (Clostridium botulinum (strain Alaska E43 / Type E3)).